The chain runs to 405 residues: Palmitoyltransferase PFA5 (405 aa).

A run of 5 helical transmembrane segments spans residues 12–32, 51–71, 154–174, 191–211, and 310–330; these read YIKLLVPICVVLVLAYLNYAI, IILWVLLGFFQLELLVYWVLI, LFFMKFMMGFLAFFIIVLIYC, FIVLFVMSGFWIIMIGCLFGI, and FYTLWRLAAAFVVFIIPFIDI. The 51-residue stretch at 111 to 161 folds into the DHHC domain; sequence YYCSNSNSIKLERSFFSKDVGYNVIKFDHYCIWIGQPIGQDNYLFFMKFMM.

It belongs to the DHHC palmitoyltransferase family. PFA5 subfamily. Post-translationally, autopalmitoylated.

The protein localises to the membrane. It carries out the reaction L-cysteinyl-[protein] + hexadecanoyl-CoA = S-hexadecanoyl-L-cysteinyl-[protein] + CoA. This Candida albicans (strain SC5314 / ATCC MYA-2876) (Yeast) protein is Palmitoyltransferase PFA5 (PFA5).